We begin with the raw amino-acid sequence, 372 residues long: UDP-N-acetylglucosamine--N-acetylmuramyl-(pentapeptide) pyrophosphoryl-undecaprenol N-acetylglucosamine transferase (372 aa).

Residues 16–18 (TGG), asparagine 128, arginine 164, serine 192, isoleucine 250, and glutamine 295 contribute to the UDP-N-acetyl-alpha-D-glucosamine site.

It belongs to the glycosyltransferase 28 family. MurG subfamily.

It localises to the cell inner membrane. The enzyme catalyses di-trans,octa-cis-undecaprenyl diphospho-N-acetyl-alpha-D-muramoyl-L-alanyl-D-glutamyl-meso-2,6-diaminopimeloyl-D-alanyl-D-alanine + UDP-N-acetyl-alpha-D-glucosamine = di-trans,octa-cis-undecaprenyl diphospho-[N-acetyl-alpha-D-glucosaminyl-(1-&gt;4)]-N-acetyl-alpha-D-muramoyl-L-alanyl-D-glutamyl-meso-2,6-diaminopimeloyl-D-alanyl-D-alanine + UDP + H(+). The protein operates within cell wall biogenesis; peptidoglycan biosynthesis. Cell wall formation. Catalyzes the transfer of a GlcNAc subunit on undecaprenyl-pyrophosphoryl-MurNAc-pentapeptide (lipid intermediate I) to form undecaprenyl-pyrophosphoryl-MurNAc-(pentapeptide)GlcNAc (lipid intermediate II). This is UDP-N-acetylglucosamine--N-acetylmuramyl-(pentapeptide) pyrophosphoryl-undecaprenol N-acetylglucosamine transferase from Paraburkholderia phytofirmans (strain DSM 17436 / LMG 22146 / PsJN) (Burkholderia phytofirmans).